A 321-amino-acid polypeptide reads, in one-letter code: MIFVYALLALVITFVLVPVLIPTLKRMKFGQSIREEGPQSHMKKTGTPTMGGLTFLLSIVITSLVVIIFVDQANPIILLLFVTIGFGLIGFIDDYIIVVKKNNQGLTSKQKFLAQIGIAIIFFVLSNVFHLVNFSTSIHIPFTNVAIPLSFAYVIFIVFWQVGFSNAVNLTDGLDGLATGLSIIGFTMYAIMSFVLGETAIGIFCIIMLFALLGFLPYNINPAKVFMGDTGSLALGGIFATISIMLNQELSLIFIGLVFVIETLSVMLQVASFKLTGKRIFKMSPIHHHFELIGWSEWKVVTVFWAVGLISGLIGLWIGVH.

Helical transmembrane passes span 1–21 (MIFV…PVLI), 50–70 (MGGL…IIFV), 76–96 (IILL…DDYI), 112–132 (FLAQ…FHLV), 140–160 (IPFT…IVFW), 176–196 (GLAT…SFVL), 200–220 (AIGI…PYNI), 225–245 (VFMG…ISIM), 250–270 (LSLI…MLQV), and 300–320 (VVTV…WIGV).

This sequence belongs to the glycosyltransferase 4 family. MraY subfamily. Mg(2+) serves as cofactor.

The protein resides in the cell membrane. The catalysed reaction is UDP-N-acetyl-alpha-D-muramoyl-L-alanyl-gamma-D-glutamyl-L-lysyl-D-alanyl-D-alanine + di-trans,octa-cis-undecaprenyl phosphate = Mur2Ac(oyl-L-Ala-gamma-D-Glu-L-Lys-D-Ala-D-Ala)-di-trans,octa-cis-undecaprenyl diphosphate + UMP. The protein operates within cell wall biogenesis; peptidoglycan biosynthesis. Functionally, catalyzes the initial step of the lipid cycle reactions in the biosynthesis of the cell wall peptidoglycan: transfers peptidoglycan precursor phospho-MurNAc-pentapeptide from UDP-MurNAc-pentapeptide onto the lipid carrier undecaprenyl phosphate, yielding undecaprenyl-pyrophosphoryl-MurNAc-pentapeptide, known as lipid I. The protein is Phospho-N-acetylmuramoyl-pentapeptide-transferase of Staphylococcus aureus (strain MSSA476).